The following is a 292-amino-acid chain: Elongation factor Ts (292 aa).

The involved in Mg(2+) ion dislocation from EF-Tu stretch occupies residues threonine 82 to valine 85.

This sequence belongs to the EF-Ts family.

The protein resides in the cytoplasm. In terms of biological role, associates with the EF-Tu.GDP complex and induces the exchange of GDP to GTP. It remains bound to the aminoacyl-tRNA.EF-Tu.GTP complex up to the GTP hydrolysis stage on the ribosome. This chain is Elongation factor Ts, found in Bordetella bronchiseptica (strain ATCC BAA-588 / NCTC 13252 / RB50) (Alcaligenes bronchisepticus).